The following is a 174-amino-acid chain: UPF0340 protein SAB1998c (174 aa).

This sequence belongs to the UPF0340 family.

The protein is UPF0340 protein SAB1998c of Staphylococcus aureus (strain bovine RF122 / ET3-1).